The sequence spans 113 residues: Signal peptidase complex subunit 1 (113 aa).

Topologically, residues 1 to 32 are cytoplasmic; sequence MDGMIAMLPAPLQQLSSHIDFQGQKVAERTYQ. A helical membrane pass occupies residues 33–53; sequence VILTLAGIIGFFVGYSTQQLS. Topologically, residues 54–57 are lumenal; the sequence is YAMY. Residues 58-78 traverse the membrane as a helical segment; sequence TVMGAAVFTALIILPPWPFLF. The Cytoplasmic portion of the chain corresponds to 79-113; the sequence is RKNPIVWQTPIEEQEASSSSDNEKKDKKKETKKTK. A disordered region spans residues 89–113; it reads IEEQEASSSSDNEKKDKKKETKKTK.

Belongs to the SPCS1 family. Component of the signal peptidase complex (SPC) composed of a catalytic subunit sec-11 and three accessory subunits spcs-1, spcs-2 and spcs-3. The complex induces a local thinning of the ER membrane which is used to measure the length of the signal peptide (SP) h-region of protein substrates. This ensures the selectivity of the complex towards h-regions shorter than 18-20 amino acids.

Its subcellular location is the endoplasmic reticulum membrane. Its function is as follows. Component of the signal peptidase complex (SPC) which catalyzes the cleavage of N-terminal signal sequences from nascent proteins as they are translocated into the lumen of the endoplasmic reticulum. Dispensable for SPC enzymatic activity. The sequence is that of Signal peptidase complex subunit 1 from Caenorhabditis briggsae.